Reading from the N-terminus, the 673-residue chain is Acetate--CoA ligase [ADP-forming] II (673 aa).

Residues 9–45 (KALLEKYGIKTAKCIFCETEEQAVKAAKEIGFPVVMK) enclose the ATP-grasp domain. Residue 35–46 (AKEIGFPVVMKV) participates in ATP binding.

The protein in the N-terminal section; belongs to the acetate CoA ligase beta subunit family. In the C-terminal section; belongs to the acetate CoA ligase alpha subunit family. In terms of assembly, homodimer.

The enzyme catalyses acetate + ATP + CoA = acetyl-CoA + ADP + phosphate. With respect to regulation, activity requires divalent metal cations. In terms of biological role, catalyzes the reversible conversion of a variety of acids to the corresponding acyl-CoA esters. Shows the highest activity with the aryl acids, indoleacetate and phenylacetate, as compared to acetate. In the reverse direction, phenylacetyl-CoA is the best substrate. Seems to be involved primarily in the degradation of aryl-CoA esters to the corresponding acids. Participates in the degradation of branched-chain amino acids via branched-chain-acyl-CoA esters. The chain is Acetate--CoA ligase [ADP-forming] II from Archaeoglobus fulgidus (strain ATCC 49558 / DSM 4304 / JCM 9628 / NBRC 100126 / VC-16).